The chain runs to 506 residues: Plant intracellular Ras-group-related LRR protein 1 (506 aa).

Positions 24 to 48 (TAKSSSSSDVEPPPSKSDPSSSSNH) are disordered. The stretch at 143–193 (KSILKLNELHESYEKLLKEAEERLVRIYESAEKNAAAVAEEEAAEVEVNEE) forms a coiled coil. LRR repeat units lie at residues 203–225 (ENPL…AFGK), 226–249 (IQGL…IAGL), 251–272 (NLLE…IGLL), 273–295 (SKLK…ICHC), 297–319 (SLVV…GFEL), 320–342 (VKLE…IGEM), 344–364 (SLRY…SFGL), 365–389 (LTNL…SFGD), 390–412 (LISL…AFGT), and 414–436 (VNLT…VVKQ). The GVYW motif lies at 437–449 (GVDAVKMYMGKRW).

This sequence belongs to the SHOC2 family. As to expression, widely expressed.

In terms of biological role, leucine-rich repeat protein that likely mediates protein interactions, possibly in the context of signal transduction. PIRL1 acts redundantly with PIRL9 in the differentiation of microspores into pollen. The protein is Plant intracellular Ras-group-related LRR protein 1 (PIRL1) of Arabidopsis thaliana (Mouse-ear cress).